The sequence spans 297 residues: Protease HtpX homolog (297 aa).

A run of 2 helical transmembrane segments spans residues 5–25 (IFLFLLSNILVITTIGIVLSI) and 44–64 (IVALLVFSAVVGFVGSFMSLL). Histidine 155 serves as a coordination point for Zn(2+). The active site involves glutamate 156. Residue histidine 159 coordinates Zn(2+). 2 helical membrane passes run 170–190 (LLQGIVNTFVVFFARIAAWAV) and 204–224 (FIAVIVFQIVFSILGSLVVFA). Zn(2+) is bound at residue glutamate 230.

Belongs to the peptidase M48B family. Requires Zn(2+) as cofactor.

The protein resides in the cell membrane. The chain is Protease HtpX homolog from Bacillus licheniformis (strain ATCC 14580 / DSM 13 / JCM 2505 / CCUG 7422 / NBRC 12200 / NCIMB 9375 / NCTC 10341 / NRRL NRS-1264 / Gibson 46).